The primary structure comprises 124 residues: MRFQFKRRLSPRKRRHLRVRAKVFGTPERPRLNVFRSNKHIYAQIIDDTRGHTLVAASTLEKEVRERFPDPHPKIEEARIVGQVVGERALAKGITRVVFDRGGYKYHGRVKALADGARAAGLQF.

It belongs to the universal ribosomal protein uL18 family. Part of the 50S ribosomal subunit; part of the 5S rRNA/L5/L18/L25 subcomplex. Contacts the 5S and 23S rRNAs.

In terms of biological role, this is one of the proteins that bind and probably mediate the attachment of the 5S RNA into the large ribosomal subunit, where it forms part of the central protuberance. The chain is Large ribosomal subunit protein uL18 from Thermomicrobium roseum (strain ATCC 27502 / DSM 5159 / P-2).